A 122-amino-acid polypeptide reads, in one-letter code: Probable F-box protein At4g23960 (122 aa).

In terms of domain architecture, F-box spans 1 to 45 (MIEQLFPEVTCYALRYLDYSSLCQLSMTSSSMRKTANDDVLWRAL).

This Arabidopsis thaliana (Mouse-ear cress) protein is Probable F-box protein At4g23960.